The primary structure comprises 243 residues: HTH-type transcriptional regulator MlrA (243 aa).

The 70-residue stretch at Leu3 to Asn72 folds into the HTH merR-type domain. The H-T-H motif DNA-binding region spans Ile6–Arg25.

As to quaternary structure, interacts with DgcM and PdeR.

Activity is regulated by DgcM and PdeR. In terms of biological role, activates transcription of csgD, the master regulator of biofilm formation, by binding to its promoter region. Also controls the transcription of cadC and ibaG. Part of a signaling cascade that regulates curli biosynthesis. The cascade is composed of two c-di-GMP control modules, in which c-di-GMP controlled by the DgcE/PdeH pair (module I) regulates the activity of the DgcM/PdeR pair (module II), which in turn regulates activity of the transcription factor MlrA. The sequence is that of HTH-type transcriptional regulator MlrA from Escherichia coli (strain K12).